Here is a 176-residue protein sequence, read N- to C-terminus: Large ribosomal subunit protein uL6 (176 aa).

Residues 156–170 (YKGKGVRYADEQVRR) show a composition bias toward basic and acidic residues. The disordered stretch occupies residues 156–176 (YKGKGVRYADEQVRRKEAKKK).

This sequence belongs to the universal ribosomal protein uL6 family. As to quaternary structure, part of the 50S ribosomal subunit.

Functionally, this protein binds to the 23S rRNA, and is important in its secondary structure. It is located near the subunit interface in the base of the L7/L12 stalk, and near the tRNA binding site of the peptidyltransferase center. This Shewanella woodyi (strain ATCC 51908 / MS32) protein is Large ribosomal subunit protein uL6.